Consider the following 219-residue polypeptide: Cell division protein B2 (219 aa).

Its function is as follows. Part of a cell division machinery. The chain is Cell division protein B2 from Sulfolobus acidocaldarius (strain ATCC 33909 / DSM 639 / JCM 8929 / NBRC 15157 / NCIMB 11770).